The primary structure comprises 300 residues: Probable amino-acid ABC transporter periplasmic-binding protein y4tE (300 aa).

The signal sequence occupies residues 1–27 (MTHLKISKTAPAVARFLPAGRIASVAA).

This sequence belongs to the bacterial solute-binding protein 3 family.

The protein resides in the periplasm. Probably part of the binding-protein-dependent transport system y4tEFGH for an amino acid. The chain is Probable amino-acid ABC transporter periplasmic-binding protein y4tE from Sinorhizobium fredii (strain NBRC 101917 / NGR234).